Here is a 426-residue protein sequence, read N- to C-terminus: 3-phosphoshikimate 1-carboxyvinyltransferase (426 aa).

Positions 22, 23, and 27 each coordinate 3-phosphoshikimate. Lys22 contributes to the phosphoenolpyruvate binding site. Phosphoenolpyruvate is bound by residues Gly96 and Arg124. Positions 170, 171, 172, 198, 314, 337, and 341 each coordinate 3-phosphoshikimate. Gln172 provides a ligand contact to phosphoenolpyruvate. Asp314 acts as the Proton acceptor in catalysis. Positions 345, 387, and 412 each coordinate phosphoenolpyruvate.

The protein belongs to the EPSP synthase family. Monomer.

The protein resides in the cytoplasm. The enzyme catalyses 3-phosphoshikimate + phosphoenolpyruvate = 5-O-(1-carboxyvinyl)-3-phosphoshikimate + phosphate. It functions in the pathway metabolic intermediate biosynthesis; chorismate biosynthesis; chorismate from D-erythrose 4-phosphate and phosphoenolpyruvate: step 6/7. In terms of biological role, catalyzes the transfer of the enolpyruvyl moiety of phosphoenolpyruvate (PEP) to the 5-hydroxyl of shikimate-3-phosphate (S3P) to produce enolpyruvyl shikimate-3-phosphate and inorganic phosphate. The protein is 3-phosphoshikimate 1-carboxyvinyltransferase of Photobacterium damsela subsp. piscicida (Pasteurella piscicida).